Reading from the N-terminus, the 450-residue chain is Probable ECA polymerase (450 aa).

Helical transmembrane passes span 6-26 (FSGLFVVWLLCTLFIATLTWF), 37-57 (VFFSLLFLLTFFFGFPLTSVL), 63-83 (VGVAPPEILLQALLSAGCFYA), 118-138 (VILMGIALVSVGIFFMHNGFL), 155-175 (GVALKRFFYFFIPAMLVVYFL), 181-201 (AWLFFLVSTVAFGLLTYMIVG), 207-227 (IIIAFAIFLFIGIIRGWISLW), 228-248 (MLAAAGVLGIVGMFWLALKRY), 341-361 (LVVMGGALFIPLGAIVVGLII), 378-398 (YKAAILHSFCFGAIFNMIVLA), and 410-430 (VFFIVVFGACLMIAKLLYWLF).

It belongs to the WzyE family. As to quaternary structure, probably part of a complex composed of WzxE, WzyE and WzzE.

The protein resides in the cell inner membrane. It functions in the pathway bacterial outer membrane biogenesis; enterobacterial common antigen biosynthesis. Its function is as follows. Probably involved in the polymerization of enterobacterial common antigen (ECA) trisaccharide repeat units. This is Probable ECA polymerase from Escherichia fergusonii (strain ATCC 35469 / DSM 13698 / CCUG 18766 / IAM 14443 / JCM 21226 / LMG 7866 / NBRC 102419 / NCTC 12128 / CDC 0568-73).